Reading from the N-terminus, the 332-residue chain is MATRAVARRQPAASGETGAAGSVRATGEIADRDLVGMYLDEIARTPLLDAAKEVELSQTIEAGVYAGKILDGEVDSDSAGASREELEALVAEGERAKDVFIRSNLRLVVAVARRYPRSGLPLLDLIQEGNAGLVRAVEKFDYAKGFKFSTYATWWIRQAITRSIADQSRTIRLPVHLVEELGRIRRVQREFNRENGRDPEPAEIAAELSSTPERVTDVLDWARDPVSLNMSVDDEGETQFGDLLEDTSAVSPEQSVLTLLRSEELDDLIGQLDDRTASIIKMRYGIEDGRERTLTEVGKQHGLTRERIRQIEKHALLELKRMAHDTGFDAAA.

Positions 1 to 21 (MATRAVARRQPAASGETGAAG) are disordered. The short motif at 124-137 (DLIQEGNAGLVRAV) is the Polymerase core binding element. The H-T-H motif DNA-binding region spans 294–313 (LTEVGKQHGLTRERIRQIEK).

The protein belongs to the sigma-70 factor family.

Sigma factors are initiation factors that promote the attachment of RNA polymerase to specific initiation sites and are then released. The protein is RNA polymerase principal sigma factor HrdD (hrdD) of Streptomyces griseus.